Here is a 329-residue protein sequence, read N- to C-terminus: DNA-directed RNA polymerase subunit alpha (329 aa).

An alpha N-terminal domain (alpha-NTD) region spans residues 1–235 (MQGSVTEFLK…EQLEAFVDLR (235 aa)). The segment at 249–329 (FDPILLRPVD…NWPPASIADE (81 aa)) is alpha C-terminal domain (alpha-CTD).

This sequence belongs to the RNA polymerase alpha chain family. Homodimer. The RNAP catalytic core consists of 2 alpha, 1 beta, 1 beta' and 1 omega subunit. When a sigma factor is associated with the core the holoenzyme is formed, which can initiate transcription.

It catalyses the reaction RNA(n) + a ribonucleoside 5'-triphosphate = RNA(n+1) + diphosphate. In terms of biological role, DNA-dependent RNA polymerase catalyzes the transcription of DNA into RNA using the four ribonucleoside triphosphates as substrates. The sequence is that of DNA-directed RNA polymerase subunit alpha from Shigella flexneri serotype 5b (strain 8401).